We begin with the raw amino-acid sequence, 797 residues long: Protein tamozhennic (797 aa).

The region spanning 79–146 is the PUB domain; it reads QNAIVAFETI…AAEDTFVLEG (68 aa). 2 disordered regions span residues 515–570 and 638–697; these read AGGI…ISDL and LSIT…SAGV. Over residues 662-679 the composition is skewed to basic and acidic residues; it reads EKARTLDKKSGTGRREAK. A RanBP2-type zinc finger spans residues 735–766; it reads IVTSPNEWSCSFCTFLNPDTKRICEMCCRSKD.

In terms of assembly, homomultimer. Binds to dl and msl-1 via their nuclear localization signal (NLS). Also binds to Ran, Ran-like and mbo.

The protein resides in the cytoplasm. Functionally, has an essential role during oogenesis and embryogenesis, perhaps in modulating the levels of nuclear import of additional proteins. Modulates the nuclear import of dorsal (dl), Dif and male specific lethal 1 (msl-1). Negatively regulates nuclear import of dl and controls the accumulation of dl in the nucleus after immune challenge. This chain is Protein tamozhennic (tamo), found in Drosophila melanogaster (Fruit fly).